We begin with the raw amino-acid sequence, 212 residues long: MAIQLVGRKAGMTRIFTEDGVSVPVTVIEVEPNRVTQVKTAETDGYQAVQVTVGSRRSSRVNKAAAGHYAKANVEAGRGLWEFRLAGDEKEINVGDELTVADFESIQMVDVTGQSKGKGFQGAIKRHNFSMQDATHGNSLSHRAPGSIGQCQTPGRVWKGKKMAGHMGAAQVTTQSLEVVRVDTERNLILVKGAVPGAVNGDVILQSAVKAR.

At Q152 the chain carries N5-methylglutamine.

This sequence belongs to the universal ribosomal protein uL3 family. In terms of assembly, part of the 50S ribosomal subunit. Forms a cluster with proteins L14 and L19. In terms of processing, methylated by PrmB.

One of the primary rRNA binding proteins, it binds directly near the 3'-end of the 23S rRNA, where it nucleates assembly of the 50S subunit. The polypeptide is Large ribosomal subunit protein uL3 (Marinomonas sp. (strain MWYL1)).